A 658-amino-acid chain; its full sequence is Translation factor GUF1, mitochondrial (658 aa).

Residues 45 to 231 (ENYRNFSIVA…AVIDRIPPPT (187 aa)) enclose the tr-type G domain. GTP contacts are provided by residues 54–61 (AHIDHGKS), 123–127 (DTPGH), and 177–180 (NKID).

The protein belongs to the TRAFAC class translation factor GTPase superfamily. Classic translation factor GTPase family. LepA subfamily.

The protein localises to the mitochondrion inner membrane. It carries out the reaction GTP + H2O = GDP + phosphate + H(+). Promotes mitochondrial protein synthesis. May act as a fidelity factor of the translation reaction, by catalyzing a one-codon backward translocation of tRNAs on improperly translocated ribosomes. Binds to mitochondrial ribosomes in a GTP-dependent manner. The chain is Translation factor GUF1, mitochondrial from Vanderwaltozyma polyspora (strain ATCC 22028 / DSM 70294 / BCRC 21397 / CBS 2163 / NBRC 10782 / NRRL Y-8283 / UCD 57-17) (Kluyveromyces polysporus).